The sequence spans 317 residues: Melanocyte-stimulating hormone receptor (317 aa).

The Extracellular portion of the chain corresponds to 1-37; it reads MPMQEPQRRLLGPFNSTRTGAPHLELSANQTGPWCLH. N-linked (GlcNAc...) asparagine glycans are attached at residues Asn15 and Asn29. Residues 38-63 traverse the membrane as a helical segment; it reads VSIPDGLFLSLGLVSLVENVLVVISI. Residues 64-72 are Cytoplasmic-facing; that stretch reads AKNQNLHSP. A helical transmembrane segment spans residues 73-93; the sequence is MYYFICCLALSDLLVSVSIVL. Topologically, residues 94 to 118 are extracellular; it reads ETTLILVLEAGALATRVTVVQQLDN. Residues 119–140 traverse the membrane as a helical segment; it reads VIDVLICASMVSSLCFLGAIAV. Residues 141–163 are Cytoplasmic-facing; the sequence is DRYISIFYALRYHSIVTLPRARW. A helical transmembrane segment spans residues 164–183; sequence AIVAIWVASISSSTLFVAYY. At 184–191 the chain is on the extracellular side; that stretch reads NHTAVLLC. A helical membrane pass occupies residues 192 to 211; sequence LVTFFLATLALMVVLYVHML. At 212–240 the chain is on the cytoplasmic side; it reads ARAHQHAQAIAQLHKRQHLVHQGFRLKGA. Residues 241-266 form a helical membrane-spanning segment; the sequence is ATLTILLGIFFLCWGPFFLYLTLIVL. Over 267–279 the chain is Extracellular; that stretch reads CPKHPTCGCFFKN. The chain crosses the membrane as a helical span at residues 280–300; sequence LNLFLALIIFNSIVDPLIYAF. Over 301 to 317 the chain is Cytoplasmic; that stretch reads RSQELRMTLKEVLLCSW. Residue Cys315 is the site of S-palmitoyl cysteine attachment.

The protein belongs to the G-protein coupled receptor 1 family. As to quaternary structure, interacts with MGRN1, but does not undergo MGRN1-mediated ubiquitination; this interaction competes with GNAS-binding and thus inhibits agonist-induced cAMP production. Interacts with OPN3; the interaction results in a decrease in MC1R-mediated cAMP signaling and ultimately a decrease in melanin production in melanocytes.

Its subcellular location is the cell membrane. In terms of biological role, receptor for MSH (alpha, beta and gamma) and ACTH. The activity of this receptor is mediated by G proteins which activate adenylate cyclase. Mediates melanogenesis, the production of eumelanin (black/brown) and phaeomelanin (red/yellow), via regulation of cAMP signaling in melanocytes. This is Melanocyte-stimulating hormone receptor (MC1R) from Chaetodipus penicillatus (Desert pocket mouse).